The following is a 145-amino-acid chain: 3-dehydroquinate dehydratase (145 aa).

Catalysis depends on Tyr24, which acts as the Proton acceptor. 3 residues coordinate substrate: Asn76, His82, and Asp89. His102 serves as the catalytic Proton donor. Substrate-binding positions include 103–104 and Arg113; that span reads LS.

It belongs to the type-II 3-dehydroquinase family. As to quaternary structure, homododecamer.

It catalyses the reaction 3-dehydroquinate = 3-dehydroshikimate + H2O. The protein operates within metabolic intermediate biosynthesis; chorismate biosynthesis; chorismate from D-erythrose 4-phosphate and phosphoenolpyruvate: step 3/7. In terms of biological role, catalyzes a trans-dehydration via an enolate intermediate. In Nitrosomonas eutropha (strain DSM 101675 / C91 / Nm57), this protein is 3-dehydroquinate dehydratase.